The chain runs to 621 residues: 1-deoxy-D-xylulose-5-phosphate synthase (621 aa).

Thiamine diphosphate contacts are provided by residues His-80 and 121 to 123 (GHS). Position 152 (Asp-152) interacts with Mg(2+). Thiamine diphosphate-binding positions include 153-154 (GA), Asn-181, Tyr-288, and Glu-370. Asn-181 provides a ligand contact to Mg(2+).

It belongs to the transketolase family. DXPS subfamily. Homodimer. The cofactor is Mg(2+). Thiamine diphosphate is required as a cofactor.

It catalyses the reaction D-glyceraldehyde 3-phosphate + pyruvate + H(+) = 1-deoxy-D-xylulose 5-phosphate + CO2. It functions in the pathway metabolic intermediate biosynthesis; 1-deoxy-D-xylulose 5-phosphate biosynthesis; 1-deoxy-D-xylulose 5-phosphate from D-glyceraldehyde 3-phosphate and pyruvate: step 1/1. Catalyzes the acyloin condensation reaction between C atoms 2 and 3 of pyruvate and glyceraldehyde 3-phosphate to yield 1-deoxy-D-xylulose-5-phosphate (DXP). The polypeptide is 1-deoxy-D-xylulose-5-phosphate synthase (Shewanella sediminis (strain HAW-EB3)).